A 447-amino-acid chain; its full sequence is N-succinylarginine dihydrolase (447 aa).

Residues 19–28 (AGLSFGNEAS), Asn110, and 137–138 (HR) each bind substrate. Glu174 is a catalytic residue. Arg212 serves as a coordination point for substrate. The active site involves His248. Residues Asp250 and Asn359 each contribute to the substrate site. Cys365 acts as the Nucleophile in catalysis.

It belongs to the succinylarginine dihydrolase family. In terms of assembly, homodimer.

It carries out the reaction N(2)-succinyl-L-arginine + 2 H2O + 2 H(+) = N(2)-succinyl-L-ornithine + 2 NH4(+) + CO2. It functions in the pathway amino-acid degradation; L-arginine degradation via AST pathway; L-glutamate and succinate from L-arginine: step 2/5. Functionally, catalyzes the hydrolysis of N(2)-succinylarginine into N(2)-succinylornithine, ammonia and CO(2). The sequence is that of N-succinylarginine dihydrolase from Salmonella agona (strain SL483).